Here is a 257-residue protein sequence, read N- to C-terminus: Imidazole glycerol phosphate synthase subunit HisF (257 aa).

Residues aspartate 11 and aspartate 130 contribute to the active site.

This sequence belongs to the HisA/HisF family. In terms of assembly, heterodimer of HisH and HisF.

The protein resides in the cytoplasm. The enzyme catalyses 5-[(5-phospho-1-deoxy-D-ribulos-1-ylimino)methylamino]-1-(5-phospho-beta-D-ribosyl)imidazole-4-carboxamide + L-glutamine = D-erythro-1-(imidazol-4-yl)glycerol 3-phosphate + 5-amino-1-(5-phospho-beta-D-ribosyl)imidazole-4-carboxamide + L-glutamate + H(+). It participates in amino-acid biosynthesis; L-histidine biosynthesis; L-histidine from 5-phospho-alpha-D-ribose 1-diphosphate: step 5/9. Functionally, IGPS catalyzes the conversion of PRFAR and glutamine to IGP, AICAR and glutamate. The HisF subunit catalyzes the cyclization activity that produces IGP and AICAR from PRFAR using the ammonia provided by the HisH subunit. This is Imidazole glycerol phosphate synthase subunit HisF from Shewanella baltica (strain OS223).